Reading from the N-terminus, the 220-residue chain is Dual specificity phosphatase 29 (220 aa).

A compositionally biased stretch (polar residues) spans 1-15 (MTSGEVKTSLKNAYS). Residues 1–29 (MTSGEVKTSLKNAYSSAKRLSPKMEEEGE) form a disordered region. The Tyrosine-protein phosphatase domain maps to 54-202 (HVNEVWPKLY…LRELDKQLVQ (149 aa)). Residue 146 to 153 (HCVMGRSR) participates in substrate binding. C147 functions as the Phosphocysteine intermediate in the catalytic mechanism.

It belongs to the protein-tyrosine phosphatase family. Non-receptor class dual specificity subfamily. In terms of assembly, homodimer. Interacts with PRKAA2.

It localises to the cytoplasm. The protein localises to the nucleus. The enzyme catalyses O-phospho-L-tyrosyl-[protein] + H2O = L-tyrosyl-[protein] + phosphate. It catalyses the reaction O-phospho-L-seryl-[protein] + H2O = L-seryl-[protein] + phosphate. The catalysed reaction is O-phospho-L-threonyl-[protein] + H2O = L-threonyl-[protein] + phosphate. Dual specificity phosphatase able to dephosphorylate phosphotyrosine, phosphoserine and phosphothreonine residues within the same substrate, with a preference for phosphotyrosine as a substrate. Involved in the modulation of intracellular signaling cascades. In skeletal muscle regulates systemic glucose homeostasis by activating, AMPK, an energy sensor protein kinase. Affects MAP kinase signaling though modulation of the MAPK1/2 cascade in skeletal muscle promoting muscle cell differentiation, development and atrophy. This Homo sapiens (Human) protein is Dual specificity phosphatase 29.